A 292-amino-acid polypeptide reads, in one-letter code: Oxidative stress-responsive serine-rich protein 1 (292 aa).

A disordered region spans residues 27 to 175; sequence SIASLSVGEG…SSDATQVSQA (149 aa). Residues 65-83 are compositionally biased toward basic residues; it reads STRKSSRGVVRTQRRRRSK. Phosphothreonine is present on residues threonine 143 and threonine 233.

This Pongo abelii (Sumatran orangutan) protein is Oxidative stress-responsive serine-rich protein 1 (OSER1).